The primary structure comprises 447 residues: GTPase Der (447 aa).

EngA-type G domains are found at residues 3-167 (PVIA…FAQR) and 181-354 (IRLA…AAAM). Residues 9 to 16 (GRPNVGKS), 56 to 60 (DTGGF), 119 to 122 (NKAE), 187 to 194 (GRPNVGKS), 234 to 238 (DTAGI), and 299 to 302 (NKWD) each bind GTP. In terms of domain architecture, KH-like spans 355–439 (SNLSTPKLTR…PLRIELRSGK (85 aa)).

Belongs to the TRAFAC class TrmE-Era-EngA-EngB-Septin-like GTPase superfamily. EngA (Der) GTPase family. As to quaternary structure, associates with the 50S ribosomal subunit.

Functionally, GTPase that plays an essential role in the late steps of ribosome biogenesis. The sequence is that of GTPase Der from Herminiimonas arsenicoxydans.